The primary structure comprises 71 residues: Pro-MCH (71 aa).

Positions 1–20 are cleaved as a signal peptide; the sequence is AKMNLSSYILILTFSLFSQG.

Belongs to the melanin-concentrating hormone family.

It is found in the secreted. This is Pro-MCH (PMCH) from Pan paniscus (Pygmy chimpanzee).